Consider the following 129-residue polypeptide: Small ribosomal subunit protein uS11 (129 aa).

This sequence belongs to the universal ribosomal protein uS11 family. In terms of assembly, part of the 30S ribosomal subunit. Interacts with proteins S7 and S18. Binds to IF-3.

Functionally, located on the platform of the 30S subunit, it bridges several disparate RNA helices of the 16S rRNA. Forms part of the Shine-Dalgarno cleft in the 70S ribosome. This Rhodopseudomonas palustris (strain BisB5) protein is Small ribosomal subunit protein uS11.